The chain runs to 65 residues: Large ribosomal subunit protein uL29 (65 aa).

This sequence belongs to the universal ribosomal protein uL29 family.

This Dehalococcoides mccartyi (strain ATCC BAA-2100 / JCM 16839 / KCTC 5957 / BAV1) protein is Large ribosomal subunit protein uL29.